The chain runs to 213 residues: Orotate phosphoribosyltransferase (213 aa).

5-phospho-alpha-D-ribose 1-diphosphate is bound at residue lysine 26. 34-35 (FF) is a binding site for orotate. Residues 72 to 73 (YK), arginine 99, lysine 100, lysine 103, histidine 105, and 124 to 132 (DDVITAGTS) contribute to the 5-phospho-alpha-D-ribose 1-diphosphate site. Orotate contacts are provided by threonine 128 and arginine 156.

The protein belongs to the purine/pyrimidine phosphoribosyltransferase family. PyrE subfamily. Homodimer. The cofactor is Mg(2+).

It catalyses the reaction orotidine 5'-phosphate + diphosphate = orotate + 5-phospho-alpha-D-ribose 1-diphosphate. Its pathway is pyrimidine metabolism; UMP biosynthesis via de novo pathway; UMP from orotate: step 1/2. In terms of biological role, catalyzes the transfer of a ribosyl phosphate group from 5-phosphoribose 1-diphosphate to orotate, leading to the formation of orotidine monophosphate (OMP). This chain is Orotate phosphoribosyltransferase, found in Methylococcus capsulatus (strain ATCC 33009 / NCIMB 11132 / Bath).